The following is a 443-amino-acid chain: UDP-N-acetylmuramoylalanine--D-glutamate ligase (443 aa).

Residue 116–122 (GTNGKST) coordinates ATP.

It belongs to the MurCDEF family.

It is found in the cytoplasm. The enzyme catalyses UDP-N-acetyl-alpha-D-muramoyl-L-alanine + D-glutamate + ATP = UDP-N-acetyl-alpha-D-muramoyl-L-alanyl-D-glutamate + ADP + phosphate + H(+). It participates in cell wall biogenesis; peptidoglycan biosynthesis. In terms of biological role, cell wall formation. Catalyzes the addition of glutamate to the nucleotide precursor UDP-N-acetylmuramoyl-L-alanine (UMA). The chain is UDP-N-acetylmuramoylalanine--D-glutamate ligase from Novosphingobium aromaticivorans (strain ATCC 700278 / DSM 12444 / CCUG 56034 / CIP 105152 / NBRC 16084 / F199).